The following is an 89-amino-acid chain: MSITAERKQELITEYATKAGDTGSPEVQVAVLSERISNLTNHFKSHKKDNHSRRGLLKMVSQRRRLLDYLKEVNHSRYQVLIEKLGLRR.

This sequence belongs to the universal ribosomal protein uS15 family. In terms of assembly, part of the 30S ribosomal subunit. Forms a bridge to the 50S subunit in the 70S ribosome, contacting the 23S rRNA.

In terms of biological role, one of the primary rRNA binding proteins, it binds directly to 16S rRNA where it helps nucleate assembly of the platform of the 30S subunit by binding and bridging several RNA helices of the 16S rRNA. Functionally, forms an intersubunit bridge (bridge B4) with the 23S rRNA of the 50S subunit in the ribosome. The chain is Small ribosomal subunit protein uS15 from Bartonella bacilliformis (strain ATCC 35685 / KC583 / Herrer 020/F12,63).